A 218-amino-acid polypeptide reads, in one-letter code: Uridine kinase (218 aa).

An ATP-binding site is contributed by 16–23 (GGSGSGKT).

It belongs to the uridine kinase family.

The protein resides in the cytoplasm. The catalysed reaction is uridine + ATP = UMP + ADP + H(+). It catalyses the reaction cytidine + ATP = CMP + ADP + H(+). It functions in the pathway pyrimidine metabolism; CTP biosynthesis via salvage pathway; CTP from cytidine: step 1/3. The protein operates within pyrimidine metabolism; UMP biosynthesis via salvage pathway; UMP from uridine: step 1/1. In Limosilactobacillus reuteri (strain DSM 20016) (Lactobacillus reuteri), this protein is Uridine kinase.